The chain runs to 119 residues: Large ribosomal subunit protein uL14 (119 aa).

It belongs to the universal ribosomal protein uL14 family. In terms of assembly, part of the 50S ribosomal subunit. Forms a cluster with proteins L3 and L19. In the 70S ribosome, L14 and L19 interact and together make contacts with the 16S rRNA in bridges B5 and B8.

Binds to 23S rRNA. Forms part of two intersubunit bridges in the 70S ribosome. This Ehrlichia ruminantium (strain Gardel) protein is Large ribosomal subunit protein uL14.